The primary structure comprises 240 residues: MQHRPQLFYTTAPAPCPYLPDRTERKVLTELAGPDAVALHNRLSQAGFRRSHAIAYAPVCVGCRACTPMRIPAATFAPTRTQKKIRSRHTDLVVNIIPPVPTDEQFRLFEMYQAVRHPDGDMAHMCWRDYAELIANTPVETFLAEFRRPDGTLVCVSLMDRLSDGLSAVYTFYDVNDLTASWGTFSILWLIEETARLGLEHLYLGYYVPGSPKMAYKAAFGPPEVFRDGQWSLLAALSPA.

This sequence belongs to the R-transferase family. Bpt subfamily.

It localises to the cytoplasm. The catalysed reaction is N-terminal L-glutamyl-[protein] + L-leucyl-tRNA(Leu) = N-terminal L-leucyl-L-glutamyl-[protein] + tRNA(Leu) + H(+). It carries out the reaction N-terminal L-aspartyl-[protein] + L-leucyl-tRNA(Leu) = N-terminal L-leucyl-L-aspartyl-[protein] + tRNA(Leu) + H(+). In terms of biological role, functions in the N-end rule pathway of protein degradation where it conjugates Leu from its aminoacyl-tRNA to the N-termini of proteins containing an N-terminal aspartate or glutamate. The protein is Aspartate/glutamate leucyltransferase of Gluconobacter oxydans (strain 621H) (Gluconobacter suboxydans).